Consider the following 156-residue polypeptide: Small ribosomal subunit protein uS7 (156 aa).

The protein belongs to the universal ribosomal protein uS7 family. Part of the 30S ribosomal subunit. Contacts proteins S9 and S11.

Its function is as follows. One of the primary rRNA binding proteins, it binds directly to 16S rRNA where it nucleates assembly of the head domain of the 30S subunit. Is located at the subunit interface close to the decoding center, probably blocks exit of the E-site tRNA. This Streptococcus uberis (strain ATCC BAA-854 / 0140J) protein is Small ribosomal subunit protein uS7.